A 350-amino-acid chain; its full sequence is MPEVQLRNNWKREEIEALFALPMNDLLFQAHSIHRQEFDPNEVQVSRLLSIKTGACPEDCKYCPQSARYDTGLEKERLLAMETVLTEARSAKAAGASRFCMGAAWRNPKERDMPYLKTMVEEVKALGMETCMTLGMLSAEQANTLADAGLDYYNHNLDTSPEYYGDVITTRTYQSRLDTLTNVRASGMKVCSGGIVGMGEKATDRAGLIQQLANLEQHPDSVPINMLVKVEGTPFEKLDDLDPLEFVRTIAVARITMPKSRVRLSAGRENMSDELQAMCFFAGANSIFYGCKLLTTPNPEENDDMSLFKRLGLHPEQGIAATKEQDEAMLAKAAAHQDKKSAAFYDAGAL.

The Radical SAM core domain occupies 41–268 (NEVQVSRLLS…KSRVRLSAGR (228 aa)). Residues Cys-56, Cys-60, and Cys-63 each coordinate [4Fe-4S] cluster. The [2Fe-2S] cluster site is built by Cys-100, Cys-131, Cys-191, and Arg-263.

The protein belongs to the radical SAM superfamily. Biotin synthase family. In terms of assembly, homodimer. [4Fe-4S] cluster is required as a cofactor. The cofactor is [2Fe-2S] cluster.

It carries out the reaction (4R,5S)-dethiobiotin + (sulfur carrier)-SH + 2 reduced [2Fe-2S]-[ferredoxin] + 2 S-adenosyl-L-methionine = (sulfur carrier)-H + biotin + 2 5'-deoxyadenosine + 2 L-methionine + 2 oxidized [2Fe-2S]-[ferredoxin]. It participates in cofactor biosynthesis; biotin biosynthesis; biotin from 7,8-diaminononanoate: step 2/2. Catalyzes the conversion of dethiobiotin (DTB) to biotin by the insertion of a sulfur atom into dethiobiotin via a radical-based mechanism. This is Biotin synthase from Shewanella pealeana (strain ATCC 700345 / ANG-SQ1).